The following is a 51-amino-acid chain: Large ribosomal subunit protein eL39 (51 aa).

Belongs to the eukaryotic ribosomal protein eL39 family.

The polypeptide is Large ribosomal subunit protein eL39 (rpl39e) (Pyrobaculum aerophilum (strain ATCC 51768 / DSM 7523 / JCM 9630 / CIP 104966 / NBRC 100827 / IM2)).